Consider the following 211-residue polypeptide: Large ribosomal subunit protein uL4 (211 aa).

The tract at residues 63–94 (RFGRQKGGGTARHGARSAPQFVGGGKAHGPRV) is disordered.

The protein belongs to the universal ribosomal protein uL4 family. As to quaternary structure, part of the 50S ribosomal subunit.

In terms of biological role, one of the primary rRNA binding proteins, this protein initially binds near the 5'-end of the 23S rRNA. It is important during the early stages of 50S assembly. It makes multiple contacts with different domains of the 23S rRNA in the assembled 50S subunit and ribosome. Functionally, forms part of the polypeptide exit tunnel. The sequence is that of Large ribosomal subunit protein uL4 from Maricaulis maris (strain MCS10) (Caulobacter maris).